Consider the following 768-residue polypeptide: Tripartite motif-containing protein 67 (768 aa).

The RING-type; degenerate zinc-finger motif lies at 7-42 (CPVCGSLFREPIILPCSHNVCLPCARTIAVQTPDGE). The span at 55-70 (AAAAATPPDQDAAAGA) shows a compositional bias: low complexity. Disordered stretches follow at residues 55 to 74 (AAAAATPPDQDAAAGATSGG) and 247 to 284 (QPPPPPTPPEATPAVTGTSTASSAGGCRSPGGAGASAP). Residues 201-248 (AICQLCDRTPPEPAATLCEQCDVLYCATCQLKCHPSRGPFAKHRLVQP) form a B box-type 1; degenerate zinc finger. Pro residues predominate over residues 247–257 (QPPPPPTPPEA). The B box-type 2 zinc finger occupies 285–327 (RKFPTCPEHEMENYSMYCVSCRSPVCYMCLEEGRHSKHEVKPL). The Zn(2+) site is built by Cys290, His293, Cys313, and His319. The stretch at 332 to 369 (KQHKAQLSQALNGVSDKAKEAKEFLVQLKNILQQIQEN) forms a coiled coil. The COS domain occupies 435–493 (IKEDDPSGFLQISDALIKRVQTSQEQWVKGALEPKVSAEFDLTLDSEPLLQAIHQLDFV). The region spanning 498 to 592 (PPVPLLQLEK…KTVVLQTSDV (95 aa)) is the Fibronectin type-III domain. The B30.2/SPRY domain occupies 574–765 (NSSGVGPYSK…VPTNLGRPKL (192 aa)).

It localises to the cytoplasm. It is found in the cytoskeleton. This is Tripartite motif-containing protein 67 (Trim67) from Mus musculus (Mouse).